Consider the following 481-residue polypeptide: MSIQTKFILFLSSSLFLTPYSVATEKSPQPHDGRLDEQLHLAKPNLPQKTPALLTNNNPSKLSITKEELAKHPDLIIRGLIPAVLQNNGEAVQLLLPLYQPLPKKDPFLLEWAEAIDLREKGYFSDSVKAYRHLFSQKTDLLPLRYQLAQALFLNNDNEAAKDQFQKLRAEQVSSDSVKIIEQYLSALNQRDQWKIQGGFSFLNESNINNAPKAGTKIGNWTAWEKESARGFSYFGNAEKKWSLPHNHFTKLSLEGSGKYYWDNKKYNEFNARAGVGLGYQTARFELSLMPFTEKRWYAGGSSGGNAMKQYSKNSGARLDLSNWLNEKWQISTALEYGEQRYETRKHLNGNNYLASATLLYLAKSGQYWFGGADYNRENTRDLDNAYQRKNVRLGWGQEWKAGISTRLILNYARRAYKEKDLIGIRQKNKEYASVLTIWHRNFHIWGITPKLSWSYQKVTSNHPFYEYDKNRIYVEISKTF.

The signal sequence occupies residues 1–23 (MSIQTKFILFLSSSLFLTPYSVA). An N-terminal domain region spans residues 25–192 (EKSPQPHDGR…QYLSALNQRD (168 aa)). A C-terminal probable beta barrel region spans residues 193–481 (QWKIQGGFSF…RIYVEISKTF (289 aa)). A run of 14 beta stranded transmembrane segments spans residues 194-204 (WKIQGGFSFLN), 233-243 (SYFGNAEKKWS), 248-258 (HFTKLSLEGSG), 271-281 (NARAGVGLGYQ), 285-295 (FELSLMPFTEK), 315-325 (SGARLDLSNWL), 329-338 (WQISTALEYG), 353-363 (YLASATLLYLA), 368-377 (YWFGGADYNR), 390-400 (KNVRLGWGQEW), 405-414 (STRLILNYAR), 432-441 (YASVLTIWHR), 448-458 (ITPKLSWSYQK), and 471-481 (NRIYVEISKTF).

Belongs to the Slam family.

Its subcellular location is the cell outer membrane. Required for correct export to the cell surface of some cell outer membrane lipoproteins. In Haemophilus influenzae (strain ATCC 51907 / DSM 11121 / KW20 / Rd), this protein is Surface lipoprotein assembly modifier 1.